The sequence spans 305 residues: GPI-anchored hemophore cfmA (305 aa).

Residues methionine 1–alanine 18 form the signal peptide. A CFEM domain is found at alanine 19 to serine 111. 4 cysteine pairs are disulfide-bonded: cysteine 25/cysteine 68, cysteine 29/cysteine 63, cysteine 42/cysteine 49, and cysteine 51/cysteine 84. Heme is bound at residue aspartate 46. The disordered stretch occupies residues threonine 92–alanine 287. Over residues glycine 95–serine 149 the composition is skewed to gly residues. Composition is skewed to low complexity over residues glycine 150–threonine 186, glycine 196–glycine 259, and glycine 267–alanine 287. Residues asparagine 183, asparagine 203, asparagine 237, asparagine 243, and asparagine 275 are each glycosylated (N-linked (GlcNAc...) asparagine). Serine 276 carries the GPI-like-anchor amidated serine lipid modification. Residues serine 277–leucine 305 constitute a propeptide, removed in mature form.

This sequence belongs to the RBT5 family. In terms of processing, the GPI-like anchor contains a phosphoceramide lipid group. The GPI-anchor is attached to the protein in the endoplasmic reticulum and serves to target the protein to the cell surface. There, the glucosamine-inositol phospholipid moiety is cleaved off and the GPI-modified mannoprotein is covalently attached via its lipidless GPI glycan remnant to the 1,6-beta-glucan of the outer cell wall layer.

It localises to the secreted. The protein resides in the cell wall. Its subcellular location is the cell membrane. Its function is as follows. GPI-anchored cell wall protein involved in stabilizing the cell wall. Not implicated in virulence, heme uptake and biofilm formation. This Aspergillus fumigatus (strain ATCC MYA-4609 / CBS 101355 / FGSC A1100 / Af293) (Neosartorya fumigata) protein is GPI-anchored hemophore cfmA.